The chain runs to 305 residues: UDP-3-O-acyl-N-acetylglucosamine deacetylase (305 aa).

Positions 79, 238, and 242 each coordinate Zn(2+). The active-site Proton donor is H265.

This sequence belongs to the LpxC family. Zn(2+) is required as a cofactor.

It catalyses the reaction a UDP-3-O-[(3R)-3-hydroxyacyl]-N-acetyl-alpha-D-glucosamine + H2O = a UDP-3-O-[(3R)-3-hydroxyacyl]-alpha-D-glucosamine + acetate. It functions in the pathway glycolipid biosynthesis; lipid IV(A) biosynthesis; lipid IV(A) from (3R)-3-hydroxytetradecanoyl-[acyl-carrier-protein] and UDP-N-acetyl-alpha-D-glucosamine: step 2/6. Its function is as follows. Catalyzes the hydrolysis of UDP-3-O-myristoyl-N-acetylglucosamine to form UDP-3-O-myristoylglucosamine and acetate, the committed step in lipid A biosynthesis. In Aliivibrio fischeri (strain ATCC 700601 / ES114) (Vibrio fischeri), this protein is UDP-3-O-acyl-N-acetylglucosamine deacetylase.